We begin with the raw amino-acid sequence, 255 residues long: tRNA (guanine-N(1)-)-methyltransferase (255 aa).

S-adenosyl-L-methionine is bound by residues G113 and 133–138 (IGDYVL).

This sequence belongs to the RNA methyltransferase TrmD family. In terms of assembly, homodimer.

The protein resides in the cytoplasm. It catalyses the reaction guanosine(37) in tRNA + S-adenosyl-L-methionine = N(1)-methylguanosine(37) in tRNA + S-adenosyl-L-homocysteine + H(+). Its function is as follows. Specifically methylates guanosine-37 in various tRNAs. The polypeptide is tRNA (guanine-N(1)-)-methyltransferase (Salmonella paratyphi A (strain ATCC 9150 / SARB42)).